The chain runs to 356 residues: AT-hook motif nuclear-localized protein 1 (356 aa).

Positions 1–127 (MVLNMESTGE…PSHLPPPSSH (127 aa)) are disordered. The span at 49–66 (VTPPPPQPSSHHTAPPPL) shows a compositional bias: pro residues. Over residues 88–97 (MKKKRGRPRK) the composition is skewed to basic residues. The Bipartite nuclear localization signal motif lies at 89-97 (KKKRGRPRK). The a.T hook DNA-binding region spans 89-101 (KKKRGRPRKYGPD). Over residues 106 to 118 (ALSPKPISSAPAP) the composition is skewed to low complexity. One can recognise a PPC domain in the interval 167 to 309 (GGNFTPHIIT…KHDFMLSSPT (143 aa)). The interval 270–287 (GLLVAASPVQVVVGSFLA) is required for nuclear localization. The Nuclear localization signal signature appears at 295–302 (KPKKNKHD).

It is found in the nucleus. It localises to the nucleoplasm. Its subcellular location is the chromosome. Transcription factor that specifically binds AT-rich DNA sequences related to the nuclear matrix attachment regions (MARs). May play a function in the positioning of chromatin fibers within the nucleus. The sequence is that of AT-hook motif nuclear-localized protein 1 from Arabidopsis thaliana (Mouse-ear cress).